The chain runs to 1040 residues: ATPase family AAA domain-containing protein 2 (1040 aa).

Positions 1-11 (MSLLKMRRHAI) are enriched in basic residues. A disordered region spans residues 1 to 30 (MSLLKMRRHAIHSSDSTSSSSSEDDCFERR). Phosphoserine is present on S65. Residue 122–129 (GPPGTGKT) coordinates ATP. S401 and S406 each carry phosphoserine. 2 coiled-coil regions span residues 619–643 (LTAEEVKRLEEQEEDTFRELRIFLR) and 735–761 (YAIIKEELDEDFEQLCEEIQESRKKRG). The Bromo domain maps to 629–741 (EQEEDTFREL…DTAYAIIKEE (113 aa)). The interval 772–799 (YHVMPKQNSPPVGDKKPDQEQNEKLKVP) is disordered. Glycyl lysine isopeptide (Lys-Gly) (interchain with G-Cter in SUMO2) cross-links involve residues K777 and K797. Residues 784-797 (GDKKPDQEQNEKLK) show a composition bias toward basic and acidic residues. 2 positions are modified to phosphothreonine: T801 and T825. Over residues 811 to 833 (LKRKFHKKSKWHVGTKIKRRKIS) the composition is skewed to basic residues. Positions 811-935 (LKRKFHKKSK…SQVTDIPEDS (125 aa)) are disordered. Over residues 835 to 848 (AKDNSLNAMNSSSR) the composition is skewed to polar residues. Phosphoserine occurs at positions 849, 883, and 891. Composition is skewed to basic and acidic residues over residues 849-863 (SDTEDSQHTHAEHTE) and 874-885 (ESDKQNRLESNI). Positions 901–919 (EEPKETTEGTELRKDRIVC) are enriched in basic and acidic residues. The residue at position 951 (S951) is a Phosphoserine. At T972 the chain carries Phosphothreonine.

Belongs to the AAA ATPase family. Interacts with ESR1 and NCOA3 and these interactions are enhanced by estradiol. Interacts with acetylated lysine residues on histone H1.4, H2A, H2B and H3 (in vitro).

Its subcellular location is the nucleus. It catalyses the reaction ATP + H2O = ADP + phosphate + H(+). May be a transcriptional coactivator of the nuclear receptor ESR1 required to induce the expression of a subset of estradiol target genes, such as CCND1, MYC and E2F1. May play a role in the recruitment or occupancy of CREBBP at some ESR1 target gene promoters. May be required for histone hyperacetylation. This chain is ATPase family AAA domain-containing protein 2 (Atad2), found in Mus musculus (Mouse).